The sequence spans 695 residues: Ubiquitin carboxyl-terminal hydrolase 20 (695 aa).

2 disordered regions span residues methionine 1–leucine 20 and serine 42–tyrosine 162. 2 stretches are compositionally biased toward low complexity: residues proline 9–leucine 20 and asparagine 61–valine 86. Positions aspartate 112–leucine 124 are enriched in acidic residues. Residues alanine 176–glutamate 476 form the USP domain. Residue cysteine 185 is the Nucleophile of the active site. The active-site Proton acceptor is histidine 435. Low complexity predominate over residues serine 556 to leucine 571. Disordered stretches follow at residues serine 556–glutamate 585 and alanine 674–threonine 695.

The protein belongs to the peptidase C19 family.

It carries out the reaction Thiol-dependent hydrolysis of ester, thioester, amide, peptide and isopeptide bonds formed by the C-terminal Gly of ubiquitin (a 76-residue protein attached to proteins as an intracellular targeting signal).. In terms of biological role, recognizes and hydrolyzes the peptide bond at the C-terminal Gly of ubiquitin. Involved in the processing of poly-ubiquitin precursors as well as that of ubiquitinated proteins. This is Ubiquitin carboxyl-terminal hydrolase 20 (UBP20) from Arabidopsis thaliana (Mouse-ear cress).